Here is a 740-residue protein sequence, read N- to C-terminus: Ion-translocating oxidoreductase complex subunit C (740 aa).

4Fe-4S ferredoxin-type domains lie at 369–397 and 407–436; these read GEPQEEQSCIRCSACADACPADLLPQQLY and KATTHNIADCIECGACAWVCPSNIPLVQYF. [4Fe-4S] cluster-binding residues include cysteine 377, cysteine 380, cysteine 383, cysteine 387, cysteine 416, cysteine 419, cysteine 422, and cysteine 426. The disordered stretch occupies residues 602-684; sequence KLEQQQANAE…EPEEQVDPRK (83 aa). Low complexity-rich tracts occupy residues 605 to 615 and 637 to 647; these read QQQANAEPEQQ.

This sequence belongs to the 4Fe4S bacterial-type ferredoxin family. RnfC subfamily. The complex is composed of six subunits: RsxA, RsxB, RsxC, RsxD, RsxE and RsxG. The cofactor is [4Fe-4S] cluster.

It localises to the cell inner membrane. In terms of biological role, part of a membrane-bound complex that couples electron transfer with translocation of ions across the membrane. Required to maintain the reduced state of SoxR. The sequence is that of Ion-translocating oxidoreductase complex subunit C from Escherichia coli O7:K1 (strain IAI39 / ExPEC).